A 366-amino-acid polypeptide reads, in one-letter code: Aminomethyltransferase (366 aa).

This sequence belongs to the GcvT family. As to quaternary structure, the glycine cleavage system is composed of four proteins: P, T, L and H.

It catalyses the reaction N(6)-[(R)-S(8)-aminomethyldihydrolipoyl]-L-lysyl-[protein] + (6S)-5,6,7,8-tetrahydrofolate = N(6)-[(R)-dihydrolipoyl]-L-lysyl-[protein] + (6R)-5,10-methylene-5,6,7,8-tetrahydrofolate + NH4(+). In terms of biological role, the glycine cleavage system catalyzes the degradation of glycine. The protein is Aminomethyltransferase of Bordetella bronchiseptica (strain ATCC BAA-588 / NCTC 13252 / RB50) (Alcaligenes bronchisepticus).